Consider the following 306-residue polypeptide: Ribosomal protein L11 methyltransferase (306 aa).

4 residues coordinate S-adenosyl-L-methionine: T154, G179, D201, and N242.

This sequence belongs to the methyltransferase superfamily. PrmA family.

It is found in the cytoplasm. It catalyses the reaction L-lysyl-[protein] + 3 S-adenosyl-L-methionine = N(6),N(6),N(6)-trimethyl-L-lysyl-[protein] + 3 S-adenosyl-L-homocysteine + 3 H(+). In terms of biological role, methylates ribosomal protein L11. In Xanthomonas axonopodis pv. citri (strain 306), this protein is Ribosomal protein L11 methyltransferase.